The following is a 101-amino-acid chain: CYC02 protein (101 aa).

One copy of the 1; approximate repeat lies at 42–64 (DAVCHHGCCRWFHHRCVRCCRSA). The interval 42–101 (DAVCHHGCCRWFHHRCVRCCRSAEEVSVSDTENNAAADAHCRHGCCRWFHGRCIRCCPSA) is 2 X approximate repeats. The stretch at 79-101 (DAHCRHGCCRWFHGRCIRCCPSA) is one 2; approximate repeat.

Belongs to the GRP family.

Its function is as follows. May be involved in the control of the cell cycle at the G1/S start transition. This is CYC02 protein (CYC02) from Catharanthus roseus (Madagascar periwinkle).